A 1021-amino-acid polypeptide reads, in one-letter code: Sodium/potassium-transporting ATPase subunit alpha-1 (1021 aa).

The propeptide occupies 1-5; the sequence is MGKGA. A compositionally biased stretch (basic and acidic residues) spans 1-11; it reads MGKGAGRDKYE. The tract at residues 1–31 is disordered; it reads MGKGAGRDKYEPTATSEHGTKKKKAKERDMD. At 6 to 85 the chain is on the cytoplasmic side; the sequence is GRDKYEPTAT…NTLTPPPTTP (80 aa). Tyr10 is modified (phosphotyrosine). Ser16 is subject to Phosphoserine; by PKC. The interval 80–82 is phosphoinositide-3 kinase binding; the sequence is PPP. Residues 86–106 form a helical membrane-spanning segment; sequence EWVKFCRQLFGGFSLLLWIGS. Topologically, residues 107–129 are extracellular; it reads LLCFLAYGITSVMEGEPNSDNLY. A helical transmembrane segment spans residues 130–150; the sequence is LGVVLAAVVIITGCFSYYQEA. Residues 151–286 lie on the Cytoplasmic side of the membrane; it reads KSSKIMESFK…GGKTPIAMEI (136 aa). Positions 214–233 are disordered; it reads SSLTGESEPQTRSPDFSNEN. Residues 287 to 306 form a helical membrane-spanning segment; it reads EHFIHLITGVAVFLGVSFFI. Topologically, residues 307–318 are extracellular; the sequence is LSLILEYTWLEA. Residues 319 to 336 form a helical membrane-spanning segment; that stretch reads VIFLIGIIVANVPEGLLA. Residues 337 to 770 lie on the Cytoplasmic side of the membrane; it reads TVTVCLTLTA…EEGRLIFDNL (434 aa). Asp374 acts as the 4-aspartylphosphate intermediate in catalysis. Lys485 is an ATP binding site. Residues Asp715 and Asp719 each coordinate Mg(2+). Residues 771-790 traverse the membrane as a helical segment; the sequence is KKSIAYTLTSNIPEITPFLI. The Extracellular segment spans residues 791 to 800; the sequence is FIIANIPLPL. Residues 801–821 traverse the membrane as a helical segment; the sequence is GTCTILCIDLGTDMVPAISLA. At 822 to 841 the chain is on the cytoplasmic side; that stretch reads YEQAESDIMKRQPRNPKTDK. Residues 842–864 traverse the membrane as a helical segment; the sequence is LVNERLISMAYGQIGMIQALGGF. Over 865–916 the chain is Extracellular; sequence FTYFVIMAENGFLPSGLVGIRLQWDDRWINDVEDSYGQQWTFEQRKIVEFTC. A helical transmembrane segment spans residues 917–936; the sequence is HTAFFVSIVVVQWADLIICK. Residues 937–949 are Cytoplasmic-facing; it reads TRRNSVFQQGMKN. Phosphoserine; by PKA is present on Ser941. The helical transmembrane segment at 950 to 968 threads the bilayer; sequence KILIFGLFEETALAAFLSY. At 969–983 the chain is on the extracellular side; the sequence is CPGMDVALRMYPLKP. The helical transmembrane segment at 984–1004 threads the bilayer; it reads TWWFCAFPYSLLIFLYDEIRK. The Cytoplasmic portion of the chain corresponds to 1005 to 1021; that stretch reads LIIRRNPGGWVERETYY.

This sequence belongs to the cation transport ATPase (P-type) (TC 3.A.3) family. Type IIC subfamily. As to quaternary structure, the sodium/potassium-transporting ATPase is composed of a catalytic alpha subunit, an auxiliary non-catalytic beta subunit and an additional regulatory subunit. Post-translationally, phosphorylation on Tyr-10 modulates pumping activity.

It localises to the cell membrane. The protein localises to the sarcolemma. It carries out the reaction K(+)(out) + Na(+)(in) + ATP + H2O = K(+)(in) + Na(+)(out) + ADP + phosphate + H(+). Its function is as follows. This is the catalytic component of the active enzyme, which catalyzes the hydrolysis of ATP coupled with the exchange of sodium and potassium ions across the plasma membrane. This action creates the electrochemical gradient of sodium and potassium ions, providing the energy for active transport of various nutrients. This is Sodium/potassium-transporting ATPase subunit alpha-1 (ATP1A1) from Gallus gallus (Chicken).